Here is a 511-residue protein sequence, read N- to C-terminus: Glucose-6-phosphate 1-dehydrogenase (511 aa).

Residues 29–36 (GASGDLAK), Arg63, and Lys164 each bind NADP(+). D-glucose 6-phosphate contacts are provided by residues Lys164, 194 to 198 (HYLGK), Glu232, and Asp251. The active-site Proton acceptor is the His256. Lys347 is an NADP(+) binding site. Lys350 is a binding site for D-glucose 6-phosphate. Residues Lys356, Arg360, and Arg382 each coordinate NADP(+). Gln384 serves as a coordination point for D-glucose 6-phosphate. Residues 390-392 (YIK), 410-412 (DLT), and Arg477 each bind NADP(+).

Belongs to the glucose-6-phosphate dehydrogenase family.

The catalysed reaction is D-glucose 6-phosphate + NADP(+) = 6-phospho-D-glucono-1,5-lactone + NADPH + H(+). It functions in the pathway carbohydrate degradation; pentose phosphate pathway; D-ribulose 5-phosphate from D-glucose 6-phosphate (oxidative stage): step 1/3. Catalyzes the rate-limiting step of the oxidative pentose-phosphate pathway, which represents a route for the dissimilation of carbohydrates besides glycolysis. The main function of this enzyme is to provide reducing power (NADPH) and pentose phosphates for fatty acid and nucleic acid synthesis. The sequence is that of Glucose-6-phosphate 1-dehydrogenase (gsdA) from Emericella nidulans (strain FGSC A4 / ATCC 38163 / CBS 112.46 / NRRL 194 / M139) (Aspergillus nidulans).